We begin with the raw amino-acid sequence, 396 residues long: Alpha-galactosidase 2 (396 aa).

The N-terminal stretch at 1–25 is a signal peptide; it reads MVLLSFSLRFIAFTLTITLTQIADG. 2 disulfides stabilise this stretch: C52–C84 and C132–C163. N-linked (GlcNAc...) asparagine glycosylation is present at N55. Substrate-binding positions include 82 to 83 and K159; that span reads DD. The active-site Nucleophile is the D161. Substrate is bound by residues 194–198, R212, and D216; that span reads EWGQE. D216 functions as the Proton donor in the catalytic mechanism. 2 N-linked (GlcNAc...) asparagine glycosylation sites follow: N343 and N354.

Belongs to the glycosyl hydrolase 27 family. In terms of assembly, homodimer.

The protein localises to the secreted. It localises to the cell wall. It is found in the extracellular space. Its subcellular location is the apoplast. The enzyme catalyses Hydrolysis of terminal, non-reducing alpha-D-galactose residues in alpha-D-galactosides, including galactose oligosaccharides, galactomannans and galactolipids.. In terms of biological role, may regulate leaf (and possibly other organ) development by functioning in cell wall loosening and cell wall expansion. The sequence is that of Alpha-galactosidase 2 from Arabidopsis thaliana (Mouse-ear cress).